The primary structure comprises 236 residues: Large ribosomal subunit protein uL1 (236 aa).

It belongs to the universal ribosomal protein uL1 family. As to quaternary structure, part of the 50S ribosomal subunit.

Binds directly to 23S rRNA. The L1 stalk is quite mobile in the ribosome, and is involved in E site tRNA release. Its function is as follows. Protein L1 is also a translational repressor protein, it controls the translation of the L11 operon by binding to its mRNA. The chain is Large ribosomal subunit protein uL1 from Corynebacterium jeikeium (strain K411).